The sequence spans 823 residues: Endoplasmin homolog (823 aa).

Residues 1–23 (MRKRTLVSVLFLFSLLFLLPDQG) form the signal peptide. Residues 29–60 (NAEESSDDVTDPPKVEEKIGGHGGLSTDSDVV) are disordered. The span at 39–48 (DPPKVEEKIG) shows a compositional bias: basic and acidic residues. Residues Glu-106, Asn-110, Asp-154, Met-159, Asn-167, Lys-173, 174-175 (SG), 194-199 (QFGVGF), Phe-199, and Thr-246 each bind ATP. N-linked (GlcNAc...) asparagine glycosylation is present at Asn-110. The interval 289–328 (ETEVPVEEDESADEETETTSTEEEKEEDAEEEDGEKKQKT) is disordered. Positions 290 to 321 (TEVPVEEDESADEETETTSTEEEKEEDAEEED) are enriched in acidic residues. N-linked (GlcNAc...) asparagine glycans are attached at residues Asn-452 and Asn-620. Over residues 777-792 (VADEEIEAAEEPETSE) the composition is skewed to acidic residues. The interval 777-823 (VADEEIEAAEEPETSEATETKSDDLAGGLNIEAEPVEQQEENTKDEL) is disordered. The short motif at 820 to 823 (KDEL) is the Prevents secretion from ER element.

It belongs to the heat shock protein 90 family. As to quaternary structure, interacts with FKBP42. Interacts with P23-1. As to expression, ubiquitous.

The protein localises to the endoplasmic reticulum lumen. Functionally, may have a molecular chaperone role in the processing of secreted materials. Required for shoot apical meristem (SAM), root apical meristem (RAM) and floral meristem (FM) formation, probably by regulating the folding of CLAVATA proteins (CLVs). Also involved in pollen tube elongation. Involved in resistance to tunicamycin- or high calcium-induced ER stresses. Possesses ATPase activity. The polypeptide is Endoplasmin homolog (Arabidopsis thaliana (Mouse-ear cress)).